Consider the following 386-residue polypeptide: GTPase Obg (386 aa).

One can recognise an Obg domain in the interval 1–159 (MKFVDEAVIR…RSLKLELMLL (159 aa)). In terms of domain architecture, OBG-type G spans 160-333 (ADVGLLGMPN…LSLKLVDFID (174 aa)). GTP contacts are provided by residues 166-173 (GMPNAGKS), 191-195 (FTTLV), 213-216 (DIPG), 283-286 (NKKD), and 314-316 (SAY). Mg(2+)-binding residues include S173 and T193. Positions 356–375 (KDSDSLNEDFDDSDDDDFDD) are disordered. Residues 360–375 (SLNEDFDDSDDDDFDD) are compositionally biased toward acidic residues.

The protein belongs to the TRAFAC class OBG-HflX-like GTPase superfamily. OBG GTPase family. In terms of assembly, monomer. Mg(2+) serves as cofactor.

It localises to the cytoplasm. In terms of biological role, an essential GTPase which binds GTP, GDP and possibly (p)ppGpp with moderate affinity, with high nucleotide exchange rates and a fairly low GTP hydrolysis rate. Plays a role in control of the cell cycle, stress response, ribosome biogenesis and in those bacteria that undergo differentiation, in morphogenesis control. This chain is GTPase Obg, found in Shewanella sediminis (strain HAW-EB3).